The primary structure comprises 144 residues: Large ribosomal subunit protein uL14 (144 aa).

This sequence belongs to the universal ribosomal protein uL14 family. In terms of assembly, part of the 50S ribosomal subunit. Forms a cluster with proteins L3 and L24e, part of which may contact the 16S rRNA in 2 intersubunit bridges.

Its function is as follows. Binds to 23S rRNA. Forms part of two intersubunit bridges in the 70S ribosome. The sequence is that of Large ribosomal subunit protein uL14 from Caldivirga maquilingensis (strain ATCC 700844 / DSM 13496 / JCM 10307 / IC-167).